The following is a 344-amino-acid chain: Meiotic expression up-regulated protein 26 (344 aa).

The protein resides in the nucleus. The polypeptide is Meiotic expression up-regulated protein 26 (meu26) (Schizosaccharomyces pombe (strain 972 / ATCC 24843) (Fission yeast)).